Here is a 778-residue protein sequence, read N- to C-terminus: Probable protein kinase DDB_G0291133 (778 aa).

The tract at residues Leu-129–Asn-162 is disordered. Positions Phe-177 to Ile-462 constitute a Protein kinase domain. ATP contacts are provided by residues Leu-183–Val-191 and Lys-206. The Proton acceptor role is filled by Asp-303. Mg(2+) is bound by residues Asn-308 and Asp-321. Disordered stretches follow at residues Asn-478–Asn-509, His-562–Gly-697, and Ser-757–Asn-778. The segment covering Ser-578–Ser-590 has biased composition (acidic residues). The span at Ser-599–Leu-651 shows a compositional bias: low complexity. Residues Val-652–Ser-670 show a composition bias toward polar residues. A compositionally biased stretch (low complexity) spans Asn-671–Asn-693. Basic and acidic residues predominate over residues Ser-757–Ser-766.

This sequence belongs to the protein kinase superfamily. Ser/Thr protein kinase family. WEE1 subfamily.

It catalyses the reaction L-seryl-[protein] + ATP = O-phospho-L-seryl-[protein] + ADP + H(+). The enzyme catalyses L-threonyl-[protein] + ATP = O-phospho-L-threonyl-[protein] + ADP + H(+). This chain is Probable protein kinase DDB_G0291133, found in Dictyostelium discoideum (Social amoeba).